We begin with the raw amino-acid sequence, 67 residues long: Beta-defensin 103A (67 aa).

Positions 1–22 (MRIHYLLFTLLFLFLVPVPGHG) are cleaved as a signal peptide. Intrachain disulfides connect Cys-33–Cys-62, Cys-40–Cys-55, and Cys-45–Cys-63.

This sequence belongs to the beta-defensin family.

Its subcellular location is the secreted. In terms of biological role, exhibits antimicrobial activity against Gram-positive and Gram-negative bacteria. In Gorilla gorilla gorilla (Western lowland gorilla), this protein is Beta-defensin 103A (DEFB103A).